Consider the following 284-residue polypeptide: Shikimate dehydrogenase (NADP(+)) (284 aa).

Shikimate contacts are provided by residues 20 to 22 (SIS) and Ser-67. Lys-71 serves as the catalytic Proton acceptor. Asp-83 provides a ligand contact to NADP(+). Positions 92 and 107 each coordinate shikimate. NADP(+)-binding positions include 129-133 (GAGGA) and Ile-227. Position 229 (Tyr-229) interacts with shikimate. Gly-250 provides a ligand contact to NADP(+).

This sequence belongs to the shikimate dehydrogenase family. As to quaternary structure, homodimer.

The enzyme catalyses shikimate + NADP(+) = 3-dehydroshikimate + NADPH + H(+). Its pathway is metabolic intermediate biosynthesis; chorismate biosynthesis; chorismate from D-erythrose 4-phosphate and phosphoenolpyruvate: step 4/7. Its function is as follows. Involved in the biosynthesis of the chorismate, which leads to the biosynthesis of aromatic amino acids. Catalyzes the reversible NADPH linked reduction of 3-dehydroshikimate (DHSA) to yield shikimate (SA). This chain is Shikimate dehydrogenase (NADP(+)), found in Streptococcus pneumoniae (strain P1031).